The following is a 378-amino-acid chain: Zinc transporter 7 (378 aa).

Residues 1-37 (MLPLSIKDDEYKPPKFNLFGKISGWFRSILSDKTSRN) are Cytoplasmic-facing. A helical transmembrane segment spans residues 38 to 58 (LFFFLCLNLSFAFVELLYGIW). The Lumenal segment spans residues 59–67 (SNCLGLISD). A helical membrane pass occupies residues 68 to 88 (SFHMFFDSTAILAGLAASVIS). Residues 89 to 102 (KWRDNDAFSYGYVR) lie on the Cytoplasmic side of the membrane. The chain crosses the membrane as a helical span at residues 103–123 (AEVLAGFVNGLFLIFTAFFIF). Over 124-140 (SEGVERALAPPDVHHER) the chain is Lumenal. A helical membrane pass occupies residues 141–161 (LLLVSILGFVVNLVGIFVFNH). Positions 161–220 (HGGHGHSHGSGHGHSHSLFNGALDHSHGHEDHCHSHEAKHGAAHSHDHDHAHGHGHLHSH) are his-rich loop. At 162 to 238 (GGHGHSHGSG…AGPSRQILQG (77 aa)) the chain is on the cytoplasmic side. The segment covering 186–223 (SHGHEDHCHSHEAKHGAAHSHDHDHAHGHGHLHSHDGP) has biased composition (basic and acidic residues). The tract at residues 186-224 (SHGHEDHCHSHEAKHGAAHSHDHDHAHGHGHLHSHDGPS) is disordered. The chain crosses the membrane as a helical span at residues 239-259 (VFLHILADTLGSIGVIASAIM). The Lumenal segment spans residues 260-264 (MQNFG). The helical transmembrane segment at 265-285 (LMIADPICSILIAILIVVSVI) threads the bilayer. Residues 286-378 (PLLRESVGIL…LYVQIDFAAM (93 aa)) are Cytoplasmic-facing.

It belongs to the cation diffusion facilitator (CDF) transporter (TC 2.A.4) family. SLC30A subfamily. Homooligomer. Highly expressed in liver, spleen, duodenum and part of the jejunum of small intestine (at protein level). Moderately expressed in kidney, lung, and brain. Barely detectable in heart. In brain, expressed in cerebellum, cerebral cortex and hippocampus (at protein level).

The protein localises to the golgi apparatus membrane. Its subcellular location is the cytoplasmic vesicle. It localises to the golgi apparatus. The protein resides in the trans-Golgi network. It is found in the sarcoplasmic reticulum. The protein localises to the mitochondrion. The catalysed reaction is Zn(2+)(in) = Zn(2+)(out). Functionally, zinc ion transporter mediating zinc entry from the cytosol into the lumen of organelles along the secretory pathway. By contributing to zinc ion homeostasis within the early secretory pathway, regulates the activation and folding of enzymes like alkaline phosphatases. The chain is Zinc transporter 7 from Mus musculus (Mouse).